A 274-amino-acid polypeptide reads, in one-letter code: Sulfur carrier protein FdhD (274 aa).

Catalysis depends on C121, which acts as the Cysteine persulfide intermediate. 258–263 is a binding site for Mo-bis(molybdopterin guanine dinucleotide); it reads FSKPGR.

The protein belongs to the FdhD family.

The protein localises to the cytoplasm. Its function is as follows. Required for formate dehydrogenase (FDH) activity. Acts as a sulfur carrier protein that transfers sulfur from IscS to the molybdenum cofactor prior to its insertion into FDH. The protein is Sulfur carrier protein FdhD of Yersinia pestis bv. Antiqua (strain Antiqua).